Reading from the N-terminus, the 338-residue chain is Heat-inducible transcription repressor HrcA (338 aa).

It belongs to the HrcA family.

In terms of biological role, negative regulator of class I heat shock genes (grpE-dnaK-dnaJ and groELS operons). Prevents heat-shock induction of these operons. The chain is Heat-inducible transcription repressor HrcA from Streptomyces avermitilis (strain ATCC 31267 / DSM 46492 / JCM 5070 / NBRC 14893 / NCIMB 12804 / NRRL 8165 / MA-4680).